Here is a 457-residue protein sequence, read N- to C-terminus: ATP synthase subunit beta (457 aa).

Residue 147-154 (GGAGVGKT) coordinates ATP.

Belongs to the ATPase alpha/beta chains family. In terms of assembly, F-type ATPases have 2 components, CF(1) - the catalytic core - and CF(0) - the membrane proton channel. CF(1) has five subunits: alpha(3), beta(3), gamma(1), delta(1), epsilon(1). CF(0) has three main subunits: a(1), b(2) and c(9-12). The alpha and beta chains form an alternating ring which encloses part of the gamma chain. CF(1) is attached to CF(0) by a central stalk formed by the gamma and epsilon chains, while a peripheral stalk is formed by the delta and b chains.

Its subcellular location is the cell inner membrane. It catalyses the reaction ATP + H2O + 4 H(+)(in) = ADP + phosphate + 5 H(+)(out). Its function is as follows. Produces ATP from ADP in the presence of a proton gradient across the membrane. The catalytic sites are hosted primarily by the beta subunits. The chain is ATP synthase subunit beta from Actinobacillus pleuropneumoniae serotype 5b (strain L20).